Here is a 428-residue protein sequence, read N- to C-terminus: Cytochrome bc complex cytochrome b subunit (428 aa).

2 stretches are compositionally biased toward low complexity: residues 1-15 and 21-52; these read MAEN…TAPA and APGA…AAAP. The disordered stretch occupies residues 1–72; it reads MAENTPKPAA…RPDPNPFKDS (72 aa). Over residues 59 to 72 the composition is skewed to basic and acidic residues; sequence PPVDRPDPNPFKDS. A helical transmembrane segment spans residues 110-130; the sequence is YFGGLGLFFFVIQILTGLLLL. Positions 161 and 175 each coordinate heme b. Transmembrane regions (helical) follow at residues 162–182, 193–213, 260–280, 312–331, 369–389, and 401–421; these read AWSA…TFFM, WVSG…GYLL, LHVV…LTLV, GIGW…MFPW, ELLA…VPFI, and IFTI…YRVY. 2 residues coordinate heme b: His-261 and His-276.

Belongs to the cytochrome b family. The cofactor is heme b.

The protein resides in the cell inner membrane. Component of the green S-bacteria bc complex, which consists of the Rieske protein and cytochrome b subunit but appears to lack a cytochrome c1-equivalent. This complex has a comparatively low redox potential. The sequence is that of Cytochrome bc complex cytochrome b subunit (petB) from Chlorobaculum thiosulfatiphilum (Chlorobium limicola f.sp. thiosulfatophilum).